The chain runs to 286 residues: uncharacterized protein (286 aa).

A run of 2 helical transmembrane segments spans residues 201-221 (VIYSITGAFSFIFGLGVLCET) and 231-251 (AIILGFIILILILAIVNYLMM).

It is found in the cell membrane. This is an uncharacterized protein from Methanocaldococcus jannaschii (strain ATCC 43067 / DSM 2661 / JAL-1 / JCM 10045 / NBRC 100440) (Methanococcus jannaschii).